The sequence spans 37 residues: Large ribosomal subunit protein bL36 (37 aa).

It belongs to the bacterial ribosomal protein bL36 family.

In Idiomarina loihiensis (strain ATCC BAA-735 / DSM 15497 / L2-TR), this protein is Large ribosomal subunit protein bL36.